A 207-amino-acid polypeptide reads, in one-letter code: Ribonuclease HII (207 aa).

Positions 12-201 constitute an RNase H type-2 domain; that stretch reads DLVAGVDEVG…VRAAWEAREG (190 aa). Residues Asp18, Glu19, and Asp110 each coordinate a divalent metal cation.

This sequence belongs to the RNase HII family. Mn(2+) is required as a cofactor. Mg(2+) serves as cofactor.

Its subcellular location is the cytoplasm. It catalyses the reaction Endonucleolytic cleavage to 5'-phosphomonoester.. Endonuclease that specifically degrades the RNA of RNA-DNA hybrids. In Pseudomonas putida (strain GB-1), this protein is Ribonuclease HII.